Reading from the N-terminus, the 130-residue chain is Small ribosomal subunit protein uS11 (130 aa).

This sequence belongs to the universal ribosomal protein uS11 family. Part of the 30S ribosomal subunit. Interacts with proteins S7 and S18. Binds to IF-3.

Functionally, located on the platform of the 30S subunit, it bridges several disparate RNA helices of the 16S rRNA. Forms part of the Shine-Dalgarno cleft in the 70S ribosome. In Synechococcus sp. (strain WH7803), this protein is Small ribosomal subunit protein uS11.